The sequence spans 314 residues: Porphobilinogen deaminase (314 aa).

Cysteine 249 bears the S-(dipyrrolylmethanemethyl)cysteine mark.

The protein belongs to the HMBS family. In terms of assembly, monomer. The cofactor is dipyrromethane.

It carries out the reaction 4 porphobilinogen + H2O = hydroxymethylbilane + 4 NH4(+). It functions in the pathway porphyrin-containing compound metabolism; protoporphyrin-IX biosynthesis; coproporphyrinogen-III from 5-aminolevulinate: step 2/4. In terms of biological role, tetrapolymerization of the monopyrrole PBG into the hydroxymethylbilane pre-uroporphyrinogen in several discrete steps. This Brucella suis biovar 1 (strain 1330) protein is Porphobilinogen deaminase.